A 221-amino-acid polypeptide reads, in one-letter code: Large ribosomal subunit protein bL25 (221 aa).

Residues 192-221 form a disordered region; that stretch reads APRVEKEETEEDTVAPGDVPAENSKDADEE.

This sequence belongs to the bacterial ribosomal protein bL25 family. CTC subfamily. Part of the 50S ribosomal subunit; part of the 5S rRNA/L5/L18/L25 subcomplex. Contacts the 5S rRNA. Binds to the 5S rRNA independently of L5 and L18.

Functionally, this is one of the proteins that binds to the 5S RNA in the ribosome where it forms part of the central protuberance. The chain is Large ribosomal subunit protein bL25 from Idiomarina loihiensis (strain ATCC BAA-735 / DSM 15497 / L2-TR).